Reading from the N-terminus, the 254-residue chain is Adenosylcobinamide-GDP ribazoletransferase (254 aa).

6 consecutive transmembrane segments (helical) span residues 28–48 (FRQTPVAFTVIGYPLGTIVAL), 62–81 (IGVYLLILIGVTGITHIDGI), 109–129 (VGVGGALAVTVTVVSLALGVL), 138–158 (VTFILVLTAEVGAKSAMALLV), 179–199 (LSLFPVILALTPLLLAIPYLG), and 200–220 (ASPTAAVVLTPLIVALVIKQW).

This sequence belongs to the CobS family. Mg(2+) is required as a cofactor.

It localises to the cell membrane. The enzyme catalyses alpha-ribazole + adenosylcob(III)inamide-GDP = adenosylcob(III)alamin + GMP + H(+). It catalyses the reaction alpha-ribazole 5'-phosphate + adenosylcob(III)inamide-GDP = adenosylcob(III)alamin 5'-phosphate + GMP + H(+). Its pathway is cofactor biosynthesis; adenosylcobalamin biosynthesis; adenosylcobalamin from cob(II)yrinate a,c-diamide: step 7/7. Functionally, joins adenosylcobinamide-GDP and alpha-ribazole to generate adenosylcobalamin (Ado-cobalamin). Also synthesizes adenosylcobalamin 5'-phosphate from adenosylcobinamide-GDP and alpha-ribazole 5'-phosphate. The chain is Adenosylcobinamide-GDP ribazoletransferase from Haloquadratum walsbyi (strain DSM 16790 / HBSQ001).